Reading from the N-terminus, the 1533-residue chain is Actin cytoskeleton-regulatory complex protein pan-1 (1533 aa).

Residues 1-204 (MYSNSNAFLG…PPPPVKPQAT (204 aa)) form a disordered region. Low complexity-rich tracts occupy residues 19 to 46 (QQPQ…QPTG), 53 to 136 (GFAP…FQTG), 143 to 170 (IPQQ…QPQP), and 177 to 193 (QIQA…QGGI). The region spanning 244–333 (DQARFETLFK…DHIKNEVSSM (90 aa)) is the EH 1 domain. One can recognise an EF-hand 1 domain in the interval 277–312 (LDGDSLSQIWTLADTTRSGQLHFPEFALAMYLCNLK). Over residues 345–359 (AGSSSAPASNAPSFA) the composition is skewed to low complexity. 2 disordered regions span residues 345-378 (AGSS…PQPS) and 393-423 (QQTG…GYAG). 2 stretches are compositionally biased toward polar residues: residues 360–378 (TQQN…PQPS) and 393–410 (QQTG…QQTG). One can recognise an EH 2 domain in the interval 513–602 (EKTRYDALFR…PELVPPSARN (90 aa)). The 36-residue stretch at 546-581 (LDKPDLERIWTLADNGNKGRLDLDEFAVAMHLIYRK) folds into the EF-hand 2 domain. A compositionally biased stretch (basic and acidic residues) spans 649–664 (NRKDATVFKNNDEEVG). Disordered stretches follow at residues 649–691 (NRKD…GDDL), 894–917 (IEDS…WEDA), 935–1306 (SRAA…STNP), and 1334–1533 (DAIS…RVLD). The stretch at 690-890 (DLTIEQLRKK…RDVEDSVREF (201 aa)) forms a coiled coil. 2 stretches are compositionally biased toward basic and acidic residues: residues 894–916 (IEDS…RWED) and 935–947 (SRAA…DRQG). Low complexity predominate over residues 968 to 982 (TPSPSISRTSTPAST). A coiled-coil region spans residues 1026 to 1209 (ETAAQRAERE…KQLEAIDDED (184 aa)). 3 stretches are compositionally biased toward basic and acidic residues: residues 1031-1063 (RAER…KLAE), 1090-1164 (GKAD…EEEK), and 1173-1203 (EAKE…KQLE). A compositionally biased stretch (acidic residues) spans 1204-1218 (AIDDEDSSSSDEEGP). Residues 1221–1237 (ITPQASTPTVGGSQVGT) are compositionally biased toward polar residues. Residues 1279-1293 (SQSSEASTSSVAAPV) show a composition bias toward low complexity. The span at 1348–1367 (DDDDDDWGSEKGSDDEDSDD) shows a compositional bias: acidic residues. Residues 1412–1495 (SSPPPPPAPV…PPPGGAPAPS (84 aa)) are compositionally biased toward pro residues. Residues 1500 to 1517 (RPAGLLGEIQAGRALKKT) enclose the WH2 domain.

The protein belongs to the PAN1 family. As to quaternary structure, component of the PAN1 actin cytoskeleton-regulatory complex.

The protein localises to the cell membrane. It localises to the endosome membrane. Its subcellular location is the cytoplasm. It is found in the cytoskeleton. The protein resides in the actin patch. Functionally, component of the PAN1 actin cytoskeleton-regulatory complex required for the internalization of endosomes during actin-coupled endocytosis. The complex links the site of endocytosis to the cell membrane-associated actin cytoskeleton. Mediates uptake of external molecules and vacuolar degradation of plasma membrane proteins. Plays a role in the proper organization of the cell membrane-associated actin cytoskeleton and promotes its destabilization. This is Actin cytoskeleton-regulatory complex protein pan-1 (pan-1) from Neurospora crassa (strain ATCC 24698 / 74-OR23-1A / CBS 708.71 / DSM 1257 / FGSC 987).